The chain runs to 158 residues: SUMO-conjugating enzyme UBC9 (158 aa).

Positions 4–157 constitute a UBC core domain; it reads IALSRLAQER…VRAQAKKFSP (154 aa). Residues 13–18 are interaction with sumo1; it reads RKAWRK. The active-site Glycyl thioester intermediate is Cys-93.

This sequence belongs to the ubiquitin-conjugating enzyme family. In terms of assembly, forms a tight complex with RANGAP1 and RANBP2.

The protein localises to the nucleus. It functions in the pathway protein modification; protein sumoylation. Its function is as follows. Accepts the ubiquitin-like proteins SUMO1, SUMO2 and SUMO3 from the UBLE1A-UBLE1B E1 complex and catalyzes their covalent attachment to other proteins with the help of an E3 ligase such as RANBP2 or CBX4. Essential for nuclear architecture and chromosome segregation. This Pagrus major (Red sea bream) protein is SUMO-conjugating enzyme UBC9 (ube2i).